The primary structure comprises 461 residues: Methylthioribose transporter (461 aa).

The next 12 membrane-spanning stretches (helical) occupy residues 33 to 53, 56 to 76, 102 to 122, 152 to 172, 185 to 205, 213 to 233, 254 to 274, 301 to 321, 355 to 375, 376 to 396, 409 to 429, and 432 to 452; these read LLGIGCVIGTGIFVITGTVAA, AGPALIISFILAGLACALAAF, LLAFLIGWDLMLEYVIALSAV, MAGAVFNLPAAVIILLITAIV, VIVLMKIAIILLFIIVGIGYV, FMPFGMKGVILSAATVFFAYL, VGIISALAVCTVLYIAVSLVL, VAGIISVGAIIGITTVMLALL, TWLTGIVAAGIAGFINLGTLA, HLVNMGTLAAFTVISIAVIVL, VPFVPVVPIISAGICLWFMYS, and GVTWLSFVIWIAVGTLVYFLY.

This sequence belongs to the amino acid-polyamine-organocation (APC) superfamily.

Its subcellular location is the cell membrane. Its function is as follows. Involved in import of methylthioribose (MTR) into the cell. The polypeptide is Methylthioribose transporter (Bacillus subtilis (strain 168)).